The chain runs to 223 residues: Large ribosomal subunit protein uL4 (223 aa).

The tract at residues 49–106 (AAARQGTHSTKTRGEVSGGGRKPYRQKGTGRARQGSTRAPQFTGGGVVHGPKPRDYSQ) is disordered.

This sequence belongs to the universal ribosomal protein uL4 family. As to quaternary structure, part of the 50S ribosomal subunit.

One of the primary rRNA binding proteins, this protein initially binds near the 5'-end of the 23S rRNA. It is important during the early stages of 50S assembly. It makes multiple contacts with different domains of the 23S rRNA in the assembled 50S subunit and ribosome. In terms of biological role, forms part of the polypeptide exit tunnel. This Mycobacterium bovis (strain ATCC BAA-935 / AF2122/97) protein is Large ribosomal subunit protein uL4.